We begin with the raw amino-acid sequence, 93 residues long: Pyrimidine/purine nucleoside phosphorylase (93 aa).

It belongs to the nucleoside phosphorylase PpnP family.

The enzyme catalyses a purine D-ribonucleoside + phosphate = a purine nucleobase + alpha-D-ribose 1-phosphate. It catalyses the reaction adenosine + phosphate = alpha-D-ribose 1-phosphate + adenine. It carries out the reaction cytidine + phosphate = cytosine + alpha-D-ribose 1-phosphate. The catalysed reaction is guanosine + phosphate = alpha-D-ribose 1-phosphate + guanine. The enzyme catalyses inosine + phosphate = alpha-D-ribose 1-phosphate + hypoxanthine. It catalyses the reaction thymidine + phosphate = 2-deoxy-alpha-D-ribose 1-phosphate + thymine. It carries out the reaction uridine + phosphate = alpha-D-ribose 1-phosphate + uracil. The catalysed reaction is xanthosine + phosphate = alpha-D-ribose 1-phosphate + xanthine. In terms of biological role, catalyzes the phosphorolysis of diverse nucleosides, yielding D-ribose 1-phosphate and the respective free bases. Can use uridine, adenosine, guanosine, cytidine, thymidine, inosine and xanthosine as substrates. Also catalyzes the reverse reactions. The chain is Pyrimidine/purine nucleoside phosphorylase from Pseudoalteromonas atlantica (strain T6c / ATCC BAA-1087).